A 573-amino-acid polypeptide reads, in one-letter code: Protein FAM227B (573 aa).

Residues 429–485 (DNKKDFKRVKQRIKDDIKFLKEQQEQIDKELDRLQAKASKNLQEVKNDFENFLHKLR) adopt a coiled-coil conformation. Over residues 497 to 521 (SASPSESLQSLQSPNSSLSSPAMSE) the composition is skewed to low complexity. The segment at 497–528 (SASPSESLQSLQSPNSSLSSPAMSEDFNSVEE) is disordered.

The protein belongs to the FAM227 family.

This is Protein FAM227B (Fam227b) from Rattus norvegicus (Rat).